Reading from the N-terminus, the 659-residue chain is Polyamine transporter 4 (659 aa).

2 stretches are compositionally biased toward polar residues: residues 1-20 (MPSS…NIQQ) and 28-45 (NVTN…TGSI). Residues 1–81 (MPSSLTKTES…LDWDGPDDPD (81 aa)) are disordered. Over 1 to 99 (MPSSLTKTES…KKWYTTMTSA (99 aa)) the chain is Cytoplasmic. Residues 100–120 (FLCLVVTMGSSLYVSSVPELV) form a helical membrane-spanning segment. Over 121 to 128 (ERYHVSQT) the chain is Extracellular. The helical transmembrane segment at 129–149 (LALAGLTFYLLGLSTVIGAPL) threads the bilayer. The Cytoplasmic portion of the chain corresponds to 150–157 (SEVFGRKP). A helical transmembrane segment spans residues 158 to 178 (VYLFSLPVSMLFTMGVGLSNG). Residues 179–187 (HMRIILPLR) lie on the Extracellular side of the membrane. The chain crosses the membrane as a helical span at residues 188 to 208 (FLSGVFASPALSVGSGTILDI). Topologically, residues 209–215 (FDVDQVS) are cytoplasmic. Residues 216 to 236 (VAMTYFVLSPFLGPVLSPIMA) form a helical membrane-spanning segment. Residues 237 to 246 (GFATEAKGWR) lie on the Extracellular side of the membrane. The helical transmembrane segment at 247–267 (WSEWIQLIAGGLILPFIALMP) threads the bilayer. Over 268–316 (ETHKGIILRKRAKKRNIALKKFSREAQKEFLKTTVTITILRPLKMLVVE) the chain is Cytoplasmic. Residues 317-337 (PIVFVFSVYVAFIFAILFGFF) form a helical membrane-spanning segment. The Extracellular segment spans residues 338 to 355 (EAYAVIYRGVYHMSMGIS). Residues 356–376 (GLPFIGIGVGLWIGAFFYLYI) traverse the membrane as a helical segment. Topologically, residues 377-423 (DRKYLFPKPPAGTQPLTEKERTSKRTTPYRGARDAETGELLPVVPEK) are cytoplasmic. The segment at 387-408 (AGTQPLTEKERTSKRTTPYRGA) is disordered. Residues 424–444 (FLIACKFGSVALPIGLFWQAW) form a helical membrane-spanning segment. Residues 445–456 (TARSDVHWMAPV) are Extracellular-facing. A helical membrane pass occupies residues 457-477 (AAGVPFGFGLILIFFSVLMYF). Residues 478–486 (STCYPPLTV) lie on the Cytoplasmic side of the membrane. The helical transmembrane segment at 487 to 509 (ASCLAANNLLRYVMSSVFPLFTI) threads the bilayer. At 510–518 (QMYTKMKIK) the chain is on the extracellular side. A helical transmembrane segment spans residues 519 to 539 (WASTLFALVCVVMIPIPWVFE). At 540-659 (KWGSKLRHKS…MATDASARMV (120 aa)) the chain is on the cytoplasmic side. Residues 587-602 (METDPSTREKPGERLS) show a composition bias toward basic and acidic residues. The tract at residues 587–631 (METDPSTREKPGERLSLRRTHTQPVPASFDREDGQHAQNRNEPIS) is disordered. A phosphothreonine mark is found at Thr-589, Thr-606, and Thr-608. Residues 622–631 (HAQNRNEPIS) are compositionally biased toward polar residues. A phosphoserine mark is found at Ser-633 and Ser-646.

Belongs to the major facilitator superfamily. DHA1 family. Polyamines/proton antiporter (TC 2.A.1.2.16) subfamily.

It localises to the cell membrane. Its function is as follows. Cell membrane polyamine/proton antiporter, involved in the detoxification of excess polyamines in the cytoplasm. Recognizes spermidine, spermine and the antimalarial drug quinidine, but not quinine, chloroquine and mefloquine. The protein is Polyamine transporter 4 (TPO4) of Saccharomyces cerevisiae (strain ATCC 204508 / S288c) (Baker's yeast).